A 95-amino-acid polypeptide reads, in one-letter code: Selenoprotein K (95 aa).

The chain crosses the membrane as a helical span at residues 20-42 (LSFLTDMFWGITDFVVMFFQSII). The disordered stretch occupies residues 47 to 95 (TRRGCQNSSSSTRYDDGRGPPGHPRRMGRINHGSGPSAPPMAGGGGUGR). U93 is a non-standard amino acid (selenocysteine).

It belongs to the selenoprotein K family.

It is found in the endoplasmic reticulum membrane. The protein resides in the cell membrane. Its function is as follows. Required for Ca(2+) flux in immune cells and plays a role in T-cell proliferation and in T-cell and neutrophil migration. Involved in endoplasmic reticulum-associated degradation (ERAD) of soluble glycosylated proteins. Required for cell surface expression of CD36 and involved in macrophage uptake of low-density lipoprotein and in foam cell formation. Required for palmitoylation. The polypeptide is Selenoprotein K (selenok) (Xenopus laevis (African clawed frog)).